We begin with the raw amino-acid sequence, 102 residues long: Small ribosomal subunit protein uS10 (102 aa).

Belongs to the universal ribosomal protein uS10 family. In terms of assembly, part of the 30S ribosomal subunit.

Involved in the binding of tRNA to the ribosomes. The polypeptide is Small ribosomal subunit protein uS10 (Bartonella tribocorum (strain CIP 105476 / IBS 506)).